Consider the following 811-residue polypeptide: Zinc finger protein 839 (811 aa).

The C2H2-type zinc-finger motif lies at Phe197–His222. 3 disordered regions span residues Gln329 to Pro349, Pro455 to Val555, and Ala612 to Gly654. Basic and acidic residues predominate over residues Ser476–Ala485. The segment covering Ser501–Ala510 has biased composition (polar residues).

This Homo sapiens (Human) protein is Zinc finger protein 839 (ZNF839).